Reading from the N-terminus, the 102-residue chain is Large ribosomal subunit protein bL21 (102 aa).

The protein belongs to the bacterial ribosomal protein bL21 family. Part of the 50S ribosomal subunit. Contacts protein L20.

Its function is as follows. This protein binds to 23S rRNA in the presence of protein L20. This is Large ribosomal subunit protein bL21 from Bacillus velezensis (strain DSM 23117 / BGSC 10A6 / LMG 26770 / FZB42) (Bacillus amyloliquefaciens subsp. plantarum).